Here is a 265-residue protein sequence, read N- to C-terminus: Putative Tubby-like protein 4 (265 aa).

The region spanning 1 to 44 (MPPELLRDVLMRIERSEDTWPSRKNVVSCVGVCKNWRQIFKEIV) is the F-box domain. Residues 228-250 (SYELKLALYFAKNSAILKKFVLR) form the FBD domain.

The protein belongs to the TUB family.

The chain is Putative Tubby-like protein 4 from Arabidopsis thaliana (Mouse-ear cress).